Here is a 141-residue protein sequence, read N- to C-terminus: Putative antiporter subunit mnhB2 (141 aa).

Helical transmembrane passes span 10–30 (SVTKIVVFILLTFGFYVFFAG), 35–55 (GGGFIGGLIFSSAFILMFLAF), 70–90 (KLMIIGSLISVATASVPMFFG), and 116–136 (LFELGILLTVVGVIVTVMLSI).

The protein belongs to the CPA3 antiporters (TC 2.A.63) subunit B family. May form a heterooligomeric complex that consists of seven subunits: mnhA2, mnhB2, mnhC2, mnhD2, mnhE2, mnhF2 and mnhG2.

The protein resides in the cell membrane. This is Putative antiporter subunit mnhB2 (mnhB2) from Staphylococcus epidermidis (strain ATCC 35984 / DSM 28319 / BCRC 17069 / CCUG 31568 / BM 3577 / RP62A).